We begin with the raw amino-acid sequence, 649 residues long: Threonine--tRNA ligase (649 aa).

Positions 1–60 (MHVTLPDGKQLDLQAGATALDVARALGPRLAQDALAALVNGELMDLMTPLPEGAQVRLIT) constitute a TGS domain. The tract at residues 248–544 (DHRKLGRELE…LIEHYGGDFP (297 aa)) is catalytic. 3 residues coordinate Zn(2+): Cys-341, His-392, and His-521.

The protein belongs to the class-II aminoacyl-tRNA synthetase family. In terms of assembly, homodimer. It depends on Zn(2+) as a cofactor.

The protein resides in the cytoplasm. The enzyme catalyses tRNA(Thr) + L-threonine + ATP = L-threonyl-tRNA(Thr) + AMP + diphosphate + H(+). Catalyzes the attachment of threonine to tRNA(Thr) in a two-step reaction: L-threonine is first activated by ATP to form Thr-AMP and then transferred to the acceptor end of tRNA(Thr). Also edits incorrectly charged L-seryl-tRNA(Thr). The chain is Threonine--tRNA ligase from Deinococcus geothermalis (strain DSM 11300 / CIP 105573 / AG-3a).